Here is a 259-residue protein sequence, read N- to C-terminus: Type III pantothenate kinase (259 aa).

Residue 6-13 (DIGNTNIT) participates in ATP binding. Position 113 to 116 (113 to 116 (GADR)) interacts with substrate. The Proton acceptor role is filled by Asp115. A K(+)-binding site is contributed by Asp135. Thr138 lines the ATP pocket. Thr190 serves as a coordination point for substrate.

This sequence belongs to the type III pantothenate kinase family. In terms of assembly, homodimer. NH4(+) serves as cofactor. The cofactor is K(+).

Its subcellular location is the cytoplasm. It catalyses the reaction (R)-pantothenate + ATP = (R)-4'-phosphopantothenate + ADP + H(+). It functions in the pathway cofactor biosynthesis; coenzyme A biosynthesis; CoA from (R)-pantothenate: step 1/5. In terms of biological role, catalyzes the phosphorylation of pantothenate (Pan), the first step in CoA biosynthesis. This is Type III pantothenate kinase from Endomicrobium trichonymphae.